The primary structure comprises 500 residues: MSYFPWLTIIVLFPISAGSFIFFLPYKGNKVIRWYTIGICLLELLLITYAFCYFFQLDDPLIQLEEDYKWINFFDFHWRLGIDGLSIGPILLTGFITTLATLAAWPVTQDSRLFHFLMLAMYSGQIGLFSSRDLLLFFIMWELELIPVYLLLSMWGGKKRLYSATKFILYTAGGSIFLLMGVLGMGLYGSNEPILNFETSANQSYPMALEILFYFGFLIAYAVKLPIIPLHTWLPDTHGEAHYSTCMLLAGILLKMGAYGLIRINMELLPHAHSIFSPWLMIVGTVQIIYAASTSFGQRNLKKRIAYSSVSHMGFIIIGICSITDTGLNGAVLQIISHGFIGAALFFLAGTSYDRIRIVYLDEMGGIAIPMPKIFTMFSSFSMASLALPGMSGFVAELIVFFGIITSPKYLLMPKVLITFVMAIGIILTPIYSLSMLRQMFYGYKLFNVPNSYFVDSGPRELFISICILLPVIGIGIYPDFVLSLLGDKVEDILSNYFQR.

Transmembrane regions (helical) follow at residues 4–24 (FPWL…IFFL), 37–57 (IGIC…FFQL), 87–107 (IGPI…AWPV), 113–130 (LFHF…GLFS), 134–154 (LLLF…LLSM), 167–187 (FILY…GMGL), 208–228 (ALEI…LPII), 242–262 (HYST…YGLI), 272–292 (AHSI…IYAA), 305–325 (IAYS…SITD), 330–350 (GAVL…FLAG), 386–406 (LALP…GIIT), 416–436 (VLIT…SLSM), and 462–482 (LFIS…PDFV).

This sequence belongs to the complex I subunit 4 family.

The protein resides in the plastid. The protein localises to the chloroplast thylakoid membrane. It carries out the reaction a plastoquinone + NADH + (n+1) H(+)(in) = a plastoquinol + NAD(+) + n H(+)(out). It catalyses the reaction a plastoquinone + NADPH + (n+1) H(+)(in) = a plastoquinol + NADP(+) + n H(+)(out). This is NAD(P)H-quinone oxidoreductase chain 4, chloroplastic from Ceratophyllum demersum (Rigid hornwort).